We begin with the raw amino-acid sequence, 189 residues long: GMP synthase [glutamine-hydrolyzing] subunit A (189 aa).

The Glutamine amidotransferase type-1 domain occupies 1 to 189 (MIVILNNGGQ…CKKCGFEFEE (189 aa)). Cys-76 serves as the catalytic Nucleophile. Catalysis depends on residues His-163 and Glu-165.

Heterodimer composed of a glutamine amidotransferase subunit (A) and a GMP-binding subunit (B).

The catalysed reaction is XMP + L-glutamine + ATP + H2O = GMP + L-glutamate + AMP + diphosphate + 2 H(+). Its pathway is purine metabolism; GMP biosynthesis; GMP from XMP (L-Gln route): step 1/1. In terms of biological role, catalyzes the synthesis of GMP from XMP. This chain is GMP synthase [glutamine-hydrolyzing] subunit A, found in Methanococcus maripaludis (strain C7 / ATCC BAA-1331).